The following is a 312-amino-acid chain: Aspartoacylase (312 aa).

Zn(2+) is bound by residues His20 and Glu23. Residues Arg62, Asn69, and Arg70 each contribute to the N-acetyl-L-aspartate site. His115 contacts Zn(2+). Positions 163 and 167 each coordinate N-acetyl-L-aspartate. The Proton donor/acceptor role is filled by Glu177. Tyr287 contributes to the N-acetyl-L-aspartate binding site.

Belongs to the AspA/AstE family. Aspartoacylase subfamily. As to quaternary structure, homodimer. Zn(2+) is required as a cofactor.

It localises to the cytoplasm. It is found in the nucleus. The catalysed reaction is an N-acyl-L-aspartate + H2O = a carboxylate + L-aspartate. It catalyses the reaction N-acetyl-L-aspartate + H2O = L-aspartate + acetate. Functionally, catalyzes the deacetylation of N-acetylaspartic acid (NAA) to produce acetate and L-aspartate. NAA occurs in high concentration in brain and its hydrolysis NAA plays a significant part in the maintenance of intact white matter. In other tissues it acts as a scavenger of NAA from body fluids. In Mus musculus (Mouse), this protein is Aspartoacylase.